Reading from the N-terminus, the 538-residue chain is MAVSSKHIPAPDLHRVRRALLSVSDKTGLIDFAKALHANGVEILSTGGTAKSIAAAGIPVKDVSEITGFPEIMDGRVKTLHPAVHGGLLAVRNDPEHVAAMEEHGIGGIDLAVINLYPFEEVRFKGGDYDTTVENIDIGGPAMIRASAKNHAYVATVVDPADYADVVAELEKHSGSLPLAFRKKLAAKAFSRTAAYDAAISNWFAEAIDEETPTYRAVAGKLHSVMRYGENPHQTAGFYLTGEKRPGVATATQLQGKQLSYNNINDTDAAFELVAEFDPARTAAVAIIKHANPCGVAEASTIKEAYLKALACDPVSAFGGIVALNRTLDEEAAEEIVKTFTEVIIAPDATEGAQAIVAAKKNLRLLVTGGLPDPRAKGIAAKTVAGGLLVQSRDNGVVDDLDLKVVTKRAPTEAELNDLKFAFRVGKHVKSNAIVYVKDGATVGIGAGQMSRVDSARIAARKAEDAAEAAGLAAPLTKGCVVASDAFFPFADGLLSAVEAGATAVIQPGGSMRDDEVIAAADEHGIAMVMTGMRHFRH.

In terms of domain architecture, MGS-like spans 6 to 158 (KHIPAPDLHR…KNHAYVATVV (153 aa)).

The protein belongs to the PurH family.

The catalysed reaction is (6R)-10-formyltetrahydrofolate + 5-amino-1-(5-phospho-beta-D-ribosyl)imidazole-4-carboxamide = 5-formamido-1-(5-phospho-D-ribosyl)imidazole-4-carboxamide + (6S)-5,6,7,8-tetrahydrofolate. It carries out the reaction IMP + H2O = 5-formamido-1-(5-phospho-D-ribosyl)imidazole-4-carboxamide. The protein operates within purine metabolism; IMP biosynthesis via de novo pathway; 5-formamido-1-(5-phospho-D-ribosyl)imidazole-4-carboxamide from 5-amino-1-(5-phospho-D-ribosyl)imidazole-4-carboxamide (10-formyl THF route): step 1/1. Its pathway is purine metabolism; IMP biosynthesis via de novo pathway; IMP from 5-formamido-1-(5-phospho-D-ribosyl)imidazole-4-carboxamide: step 1/1. The chain is Bifunctional purine biosynthesis protein PurH from Brucella melitensis biotype 2 (strain ATCC 23457).